Here is a 143-residue protein sequence, read N- to C-terminus: ATP synthase subunit b', chloroplastic (143 aa).

A helical membrane pass occupies residues 12–31; that stretch reads LPVMGLQVVLLSWLLEQILY.

Belongs to the ATPase B chain family. As to quaternary structure, F-type ATPases have 2 components, F(1) - the catalytic core - and F(0) - the membrane proton channel. F(1) has five subunits: alpha(3), beta(3), gamma(1), delta(1), epsilon(1). F(0) has four main subunits: a(1), b(1), b'(1) and c(10-14). The alpha and beta chains form an alternating ring which encloses part of the gamma chain. F(1) is attached to F(0) by a central stalk formed by the gamma and epsilon chains, while a peripheral stalk is formed by the delta, b and b' chains.

It localises to the plastid. The protein resides in the chloroplast thylakoid membrane. F(1)F(0) ATP synthase produces ATP from ADP in the presence of a proton or sodium gradient. F-type ATPases consist of two structural domains, F(1) containing the extramembraneous catalytic core and F(0) containing the membrane proton channel, linked together by a central stalk and a peripheral stalk. During catalysis, ATP synthesis in the catalytic domain of F(1) is coupled via a rotary mechanism of the central stalk subunits to proton translocation. Functionally, component of the F(0) channel, it forms part of the peripheral stalk, linking F(1) to F(0). The b'-subunit is a diverged and duplicated form of b found in plants and photosynthetic bacteria. In Cyanidioschyzon merolae (strain NIES-3377 / 10D) (Unicellular red alga), this protein is ATP synthase subunit b', chloroplastic.